The sequence spans 572 residues: Hemagglutinin-neuraminidase (572 aa).

Topologically, residues 1–31 (MEYWKHTNHRKDAGNELETSMATHGNKLTNK) are intravirion. Residues 32–52 (ITYILWTIILVLLSIVLIIVL) traverse the membrane as a helical segment. Topologically, residues 53-572 (INSIKSEKAH…FKTEVPKSCS (520 aa)) are virion surface. Intrachain disulfides connect Cys190–Cys214 and Cys256–Cys269. The tract at residues 252 to 257 (NRKSCS) is involved in neuraminidase activity. Asn308 and Asn351 each carry an N-linked (GlcNAc...) asparagine; by host glycan. 2 disulfides stabilise this stretch: Cys355/Cys469 and Cys463/Cys473. Residue Asn523 is glycosylated (N-linked (GlcNAc...) asparagine; by host). Cys535 and Cys544 are disulfide-bonded.

This sequence belongs to the paramyxoviruses hemagglutinin-neuraminidase family. As to quaternary structure, homotetramer; composed of disulfide-linked homodimers. Interacts with F protein trimer.

It localises to the virion membrane. Its subcellular location is the host cell membrane. The enzyme catalyses Hydrolysis of alpha-(2-&gt;3)-, alpha-(2-&gt;6)-, alpha-(2-&gt;8)- glycosidic linkages of terminal sialic acid residues in oligosaccharides, glycoproteins, glycolipids, colominic acid and synthetic substrates.. In terms of biological role, attaches the virus to sialic acid-containing cell receptors and thereby initiating infection. Binding of HN protein to the receptor induces a conformational change that allows the F protein to trigger virion/cell membranes fusion. Functionally, neuraminidase activity ensures the efficient spread of the virus by dissociating the mature virions from the neuraminic acid containing glycoproteins. The sequence is that of Hemagglutinin-neuraminidase (HN) from Human parainfluenza 3 virus (strain Tex/9305/82) (HPIV-3).